The sequence spans 345 residues: D-amino-acid oxidase (345 aa).

Serine 10, isoleucine 13, serine 49, glycine 53, and asparagine 55 together coordinate FAD. 2 residues coordinate (R)-lactate: tyrosine 230 and arginine 290. Anthranilate-binding residues include tyrosine 230 and arginine 290. Residues arginine 290, serine 317, glycine 320, tyrosine 321, and glutamine 322 each coordinate FAD. Positions 343–345 (AKL) match the Microbody targeting signal motif.

The protein belongs to the DAMOX/DASOX family. FAD is required as a cofactor.

It is found in the peroxisome matrix. The catalysed reaction is a D-alpha-amino acid + O2 + H2O = a 2-oxocarboxylate + H2O2 + NH4(+). It catalyses the reaction D-methionine + O2 + H2O = 4-methylsulfanyl-2-oxobutanoate + H2O2 + NH4(+). In terms of biological role, catalyzes the oxidative deamination of D-amino acids with broad substrate specificity. Enables the organism to utilize D-amino acids as a source of nutrients. Enables the organism to utilize D-alanine as a nitrogen source, although it is not strictly required for this process. Also enables utilization of D-alanine as a carbon source. This is D-amino-acid oxidase from Candida boidinii (Yeast).